The following is a 688-amino-acid chain: DNA ligase (688 aa).

Residues D38–D42, S87–L88, and E118 contribute to the NAD(+) site. K120 (N6-AMP-lysine intermediate) is an active-site residue. The NAD(+) site is built by R141, E175, K291, and K315. Residues C409, C412, C428, and C433 each coordinate Zn(2+). The BRCT domain occupies M590–E679.

This sequence belongs to the NAD-dependent DNA ligase family. LigA subfamily. Mg(2+) serves as cofactor. It depends on Mn(2+) as a cofactor.

It catalyses the reaction NAD(+) + (deoxyribonucleotide)n-3'-hydroxyl + 5'-phospho-(deoxyribonucleotide)m = (deoxyribonucleotide)n+m + AMP + beta-nicotinamide D-nucleotide.. Functionally, DNA ligase that catalyzes the formation of phosphodiester linkages between 5'-phosphoryl and 3'-hydroxyl groups in double-stranded DNA using NAD as a coenzyme and as the energy source for the reaction. It is essential for DNA replication and repair of damaged DNA. This chain is DNA ligase, found in Thermotoga petrophila (strain ATCC BAA-488 / DSM 13995 / JCM 10881 / RKU-1).